The sequence spans 550 residues: CCR4-NOT transcription complex subunit 6-like-A (550 aa).

Residues 1-148 (MPKEKYDPPD…LYQEPDGMRK (148 aa)) are required for interaction with cnot1, cnot3 and cnot7. LRR repeat units follow at residues 52 to 73 (HLTVLHLSDNNLSRIPPDIAKL), 75 to 96 (NLVYLDLSSNKLRSLPAELGNV), 98 to 120 (SLRELLLNNNLLRVLPFELGRLF), and 121 to 143 (RLQTLGLKGNPLSQDILSLYQEP). The interval 153–550 (MLDNLSVHPE…INGVHLPSRR (398 aa)) is nuclease domain. Glutamate 235 contributes to the Mg(2+) binding site. Substrate-binding residues include glutamate 235, glutamate 271, histidine 355, and proline 360. Aspartate 405 contributes to the Mg(2+) binding site. Aspartate 405 acts as the Proton donor/acceptor in catalysis. Residues asparagine 407, asparagine 474, and phenylalanine 479 each coordinate substrate.

The protein belongs to the CCR4/nocturin family. In terms of assembly, component of the CCR4-NOT complex. The cofactor is Mg(2+).

It localises to the cytoplasm. The protein localises to the nucleus. The catalysed reaction is Exonucleolytic cleavage of poly(A) to 5'-AMP.. In terms of biological role, poly(A) nuclease with 3'-5' RNase activity. Catalytic component of the CCR4-NOT complex which is one of the major cellular mRNA deadenylases and is linked to various cellular processes including bulk mRNA degradation, miRNA-mediated repression, translational repression during translational initiation and general transcription regulation. Additional complex functions may be a consequence of its influence on mRNA expression. The chain is CCR4-NOT transcription complex subunit 6-like-A (cnot6l-a) from Xenopus laevis (African clawed frog).